Here is a 437-residue protein sequence, read N- to C-terminus: Phosphomethylpyrimidine synthase (437 aa).

Residues Asn-69, Met-98, Tyr-127, His-163, 185 to 187 (SRG), 226 to 229 (DACR), and Glu-265 each bind substrate. Zn(2+) is bound at residue His-269. Substrate is bound at residue Tyr-292. His-333 is a Zn(2+) binding site. [4Fe-4S] cluster contacts are provided by Cys-409, Cys-412, and Cys-416.

This sequence belongs to the ThiC family. The cofactor is [4Fe-4S] cluster.

It carries out the reaction 5-amino-1-(5-phospho-beta-D-ribosyl)imidazole + S-adenosyl-L-methionine = 4-amino-2-methyl-5-(phosphooxymethyl)pyrimidine + CO + 5'-deoxyadenosine + formate + L-methionine + 3 H(+). It participates in cofactor biosynthesis; thiamine diphosphate biosynthesis. In terms of biological role, catalyzes the synthesis of the hydroxymethylpyrimidine phosphate (HMP-P) moiety of thiamine from aminoimidazole ribotide (AIR) in a radical S-adenosyl-L-methionine (SAM)-dependent reaction. The protein is Phosphomethylpyrimidine synthase of Clostridium botulinum (strain ATCC 19397 / Type A).